Consider the following 174-residue polypeptide: Endoribonuclease YbeY (174 aa).

The Zn(2+) site is built by H129, H133, and H139.

Belongs to the endoribonuclease YbeY family. It depends on Zn(2+) as a cofactor.

The protein localises to the cytoplasm. Its function is as follows. Single strand-specific metallo-endoribonuclease involved in late-stage 70S ribosome quality control and in maturation of the 3' terminus of the 16S rRNA. The sequence is that of Endoribonuclease YbeY from Lactobacillus delbrueckii subsp. bulgaricus (strain ATCC BAA-365 / Lb-18).